Reading from the N-terminus, the 264-residue chain is Probable transcriptional regulatory protein PPA1157 (264 aa).

This sequence belongs to the TACO1 family.

The protein localises to the cytoplasm. The chain is Probable transcriptional regulatory protein PPA1157 from Cutibacterium acnes (strain DSM 16379 / KPA171202) (Propionibacterium acnes).